The primary structure comprises 171 residues: uncharacterized protein (171 aa).

The signal sequence occupies residues 1–17 (MLKRIIWILFLLGLTWG).

Its function is as follows. Part of the elfADCG-ycbUVF fimbrial operon, which promotes adhesion of bacteria to different abiotic surfaces. This is an uncharacterized protein from Escherichia coli (strain K12).